The chain runs to 248 residues: Ribosomal RNA small subunit methyltransferase J (248 aa).

S-adenosyl-L-methionine-binding positions include 101–102 (RD), 117–118 (ER), 153–154 (SS), and D171.

The protein belongs to the methyltransferase superfamily. RsmJ family.

It localises to the cytoplasm. The enzyme catalyses guanosine(1516) in 16S rRNA + S-adenosyl-L-methionine = N(2)-methylguanosine(1516) in 16S rRNA + S-adenosyl-L-homocysteine + H(+). Functionally, specifically methylates the guanosine in position 1516 of 16S rRNA. In Serratia proteamaculans (strain 568), this protein is Ribosomal RNA small subunit methyltransferase J.